Reading from the N-terminus, the 344-residue chain is Intraflagellar transport protein 46 (344 aa).

A compositionally biased stretch (acidic residues) spans 1 to 16 (MDDSMDYPDRDGDDLD). The segment at 1 to 100 (MDDSMDYPDR…IANSDEAPPG (100 aa)) is disordered. Over residues 18–30 (FQGTARSQVVQNQ) the composition is skewed to polar residues.

This sequence belongs to the IFT46 family. Component of the IFT complex B, the core composed of IFT25, IFT27, IFT46, IFT52, IFT74, IFT81 and IFT88 as well as associated subunits IFT20, IFT57, IFT80 and IFT172. Interacts with IFT25, IFT52, IFT70, IFT88 and DAW1.

It is found in the cytoplasm. The protein localises to the cytoskeleton. Its subcellular location is the cilium basal body. The protein resides in the cell projection. It localises to the cilium. Its function is as follows. Forms part of a complex involved in intraflagellar transport (IFT), the bi-directional movement of particles required for the assembly, maintenance and functioning of primary cilia. Plays a role in maintaining IFT complex B stability. The sequence is that of Intraflagellar transport protein 46 from Chlamydomonas reinhardtii (Chlamydomonas smithii).